The primary structure comprises 459 residues: Cysteine--tRNA ligase (459 aa).

Cys31 provides a ligand contact to Zn(2+). The 'HIGH' region signature appears at 33–43 (PTVYDNPHIGN). Cys216, His241, and Glu245 together coordinate Zn(2+). Residues 274-278 (KMSKS) carry the 'KMSKS' region motif. Residue Lys277 participates in ATP binding.

Belongs to the class-I aminoacyl-tRNA synthetase family. Monomer. Zn(2+) serves as cofactor.

The protein localises to the cytoplasm. It catalyses the reaction tRNA(Cys) + L-cysteine + ATP = L-cysteinyl-tRNA(Cys) + AMP + diphosphate. This Rickettsia canadensis (strain McKiel) protein is Cysteine--tRNA ligase.